The primary structure comprises 154 residues: MGLSDGEWQLVLNVWGKVEADLAGHGQDILIRLFKGHPETLEKFDKFKHLKTEADMKASEDLKKHGNTVLTALGAILKKKGHHEAELKPLAQSHATKHKIPIKYLEFISEAIIHVLHSRHPAEFGADAQGAMNKALELFRKDIAAKYKELGFHG.

The 147-residue stretch at 2–148 (GLSDGEWQLV…FRKDIAAKYK (147 aa)) folds into the Globin domain. Serine 4 carries the post-translational modification Phosphoserine. Nitrite is bound at residue histidine 65. Histidine 65 lines the O2 pocket. Threonine 68 is modified (phosphothreonine). Histidine 94 lines the heme b pocket.

The protein belongs to the globin family. Monomeric.

It is found in the cytoplasm. It localises to the sarcoplasm. It carries out the reaction Fe(III)-heme b-[protein] + nitric oxide + H2O = Fe(II)-heme b-[protein] + nitrite + 2 H(+). The enzyme catalyses H2O2 + AH2 = A + 2 H2O. In terms of biological role, monomeric heme protein which primary function is to store oxygen and facilitate its diffusion within muscle tissues. Reversibly binds oxygen through a pentacoordinated heme iron and enables its timely and efficient release as needed during periods of heightened demand. Depending on the oxidative conditions of tissues and cells, and in addition to its ability to bind oxygen, it also has a nitrite reductase activity whereby it regulates the production of bioactive nitric oxide. Under stress conditions, like hypoxia and anoxia, it also protects cells against reactive oxygen species thanks to its pseudoperoxidase activity. This chain is Myoglobin (MB), found in Globicephala melas (Long-finned pilot whale).